The primary structure comprises 828 residues: Periplasmic nitrate reductase (828 aa).

The tat-type signal signal peptide spans 1 to 31 (MKLSRRSFMKANAVAAAAAAAGLSVPGVARA). Residues 39 to 95 (IKWDKAPCRFCGTGCGVLVGTQQGRVVACQGDPDAPVNRGLNCIKGYFLPKIMYGKD) enclose the 4Fe-4S Mo/W bis-MGD-type domain. Cys-46, Cys-49, Cys-53, and Cys-81 together coordinate [4Fe-4S] cluster. Mo-bis(molybdopterin guanine dinucleotide) is bound by residues Lys-83, Gln-150, Asn-175, Cys-179, 212 to 219 (WGANMAEM), 243 to 247 (STYQH), 262 to 264 (QSD), Met-372, Gln-376, Asn-482, 508 to 509 (SD), Lys-531, Asp-558, and 718 to 727 (TGRVLEHWHT). Position 794 (Phe-794) interacts with substrate. Positions 802 and 819 each coordinate Mo-bis(molybdopterin guanine dinucleotide).

It belongs to the prokaryotic molybdopterin-containing oxidoreductase family. NasA/NapA/NarB subfamily. In terms of assembly, component of the periplasmic nitrate reductase NapAB complex composed of NapA and NapB. It depends on [4Fe-4S] cluster as a cofactor. Mo-bis(molybdopterin guanine dinucleotide) is required as a cofactor. In terms of processing, predicted to be exported by the Tat system. The position of the signal peptide cleavage has not been experimentally proven.

The protein localises to the periplasm. It carries out the reaction 2 Fe(II)-[cytochrome] + nitrate + 2 H(+) = 2 Fe(III)-[cytochrome] + nitrite + H2O. Its function is as follows. Catalytic subunit of the periplasmic nitrate reductase complex NapAB. Receives electrons from NapB and catalyzes the reduction of nitrate to nitrite. The sequence is that of Periplasmic nitrate reductase from Escherichia coli O9:H4 (strain HS).